Reading from the N-terminus, the 264-residue chain is uncharacterized protein (264 aa).

The next 4 helical transmembrane spans lie at 43–63 (VVAA…LYLI), 68–88 (FLPS…LLGI), 96–116 (ILPA…LGCI), and 150–170 (LAAK…VLAV). Positions 216–247 (SYEDALKNSSQQPSTSSSSSSPPSRPPHSVYT) are disordered. The span at 224 to 237 (SSQQPSTSSSSSSP) shows a compositional bias: low complexity.

Its subcellular location is the membrane. This is an uncharacterized protein from Caenorhabditis elegans.